A 148-amino-acid chain; its full sequence is Deoxyuridine 5'-triphosphate nucleotidohydrolase (148 aa).

Substrate contacts are provided by residues 68–70 (RSG), Asn-81, 85–87 (TID), and Lys-95.

Belongs to the dUTPase family. The cofactor is Mg(2+).

It catalyses the reaction dUTP + H2O = dUMP + diphosphate + H(+). The protein operates within pyrimidine metabolism; dUMP biosynthesis; dUMP from dCTP (dUTP route): step 2/2. Functionally, this enzyme is involved in nucleotide metabolism: it produces dUMP, the immediate precursor of thymidine nucleotides and it decreases the intracellular concentration of dUTP so that uracil cannot be incorporated into DNA. This Rickettsia akari (strain Hartford) protein is Deoxyuridine 5'-triphosphate nucleotidohydrolase.